We begin with the raw amino-acid sequence, 339 residues long: Anthranilate phosphoribosyltransferase (339 aa).

5-phospho-alpha-D-ribose 1-diphosphate contacts are provided by residues G79, 82–83, T87, 89–92, 107–115, and S119; these read GD, NIST, and KHGNRAVSS. G79 is a binding site for anthranilate. S91 contributes to the Mg(2+) binding site. N110 is an anthranilate binding site. R165 contributes to the anthranilate binding site. Positions 224 and 225 each coordinate Mg(2+).

Belongs to the anthranilate phosphoribosyltransferase family. Homodimer. It depends on Mg(2+) as a cofactor.

The enzyme catalyses N-(5-phospho-beta-D-ribosyl)anthranilate + diphosphate = 5-phospho-alpha-D-ribose 1-diphosphate + anthranilate. Its pathway is amino-acid biosynthesis; L-tryptophan biosynthesis; L-tryptophan from chorismate: step 2/5. Its function is as follows. Catalyzes the transfer of the phosphoribosyl group of 5-phosphorylribose-1-pyrophosphate (PRPP) to anthranilate to yield N-(5'-phosphoribosyl)-anthranilate (PRA). The chain is Anthranilate phosphoribosyltransferase from Geobacillus sp. (strain WCH70).